We begin with the raw amino-acid sequence, 207 residues long: Thiamine-phosphate synthase (207 aa).

4-amino-2-methyl-5-(diphosphooxymethyl)pyrimidine-binding positions include 37–41 (QYRHK) and asparagine 69. 2 residues coordinate Mg(2+): aspartate 70 and aspartate 89. Residues serine 108 and lysine 138 each contribute to the 4-amino-2-methyl-5-(diphosphooxymethyl)pyrimidine site. Residues glycine 165 and 185 to 186 (IS) each bind 2-[(2R,5Z)-2-carboxy-4-methylthiazol-5(2H)-ylidene]ethyl phosphate.

This sequence belongs to the thiamine-phosphate synthase family. Mg(2+) serves as cofactor.

It carries out the reaction 2-[(2R,5Z)-2-carboxy-4-methylthiazol-5(2H)-ylidene]ethyl phosphate + 4-amino-2-methyl-5-(diphosphooxymethyl)pyrimidine + 2 H(+) = thiamine phosphate + CO2 + diphosphate. It catalyses the reaction 2-(2-carboxy-4-methylthiazol-5-yl)ethyl phosphate + 4-amino-2-methyl-5-(diphosphooxymethyl)pyrimidine + 2 H(+) = thiamine phosphate + CO2 + diphosphate. The catalysed reaction is 4-methyl-5-(2-phosphooxyethyl)-thiazole + 4-amino-2-methyl-5-(diphosphooxymethyl)pyrimidine + H(+) = thiamine phosphate + diphosphate. It functions in the pathway cofactor biosynthesis; thiamine diphosphate biosynthesis; thiamine phosphate from 4-amino-2-methyl-5-diphosphomethylpyrimidine and 4-methyl-5-(2-phosphoethyl)-thiazole: step 1/1. In terms of biological role, condenses 4-methyl-5-(beta-hydroxyethyl)thiazole monophosphate (THZ-P) and 2-methyl-4-amino-5-hydroxymethyl pyrimidine pyrophosphate (HMP-PP) to form thiamine monophosphate (TMP). The sequence is that of Thiamine-phosphate synthase from Janthinobacterium sp. (strain Marseille) (Minibacterium massiliensis).